The primary structure comprises 459 residues: tRNA modification GTPase MnmE (459 aa).

(6S)-5-formyl-5,6,7,8-tetrahydrofolate is bound by residues Arg22, Glu85, and Arg124. The region spanning 221–380 (GLSTVIVGKP…LEIQIRDLFF (160 aa)) is the TrmE-type G domain. Asn231 lines the K(+) pocket. Residues 231-236 (NVGKSS), 250-256 (TEVAGTT), and 275-278 (DTAG) each bind GTP. Position 235 (Ser235) interacts with Mg(2+). Positions 250, 252, and 255 each coordinate K(+). Mg(2+) is bound at residue Thr256. Lys459 is a binding site for (6S)-5-formyl-5,6,7,8-tetrahydrofolate.

This sequence belongs to the TRAFAC class TrmE-Era-EngA-EngB-Septin-like GTPase superfamily. TrmE GTPase family. In terms of assembly, homodimer. Heterotetramer of two MnmE and two MnmG subunits. It depends on K(+) as a cofactor.

Its subcellular location is the cytoplasm. Its function is as follows. Exhibits a very high intrinsic GTPase hydrolysis rate. Involved in the addition of a carboxymethylaminomethyl (cmnm) group at the wobble position (U34) of certain tRNAs, forming tRNA-cmnm(5)s(2)U34. The sequence is that of tRNA modification GTPase MnmE from Staphylococcus aureus (strain Mu3 / ATCC 700698).